Here is a 347-residue protein sequence, read N- to C-terminus: Heme A synthase (347 aa).

A run of 8 helical transmembrane segments spans residues Val14–Ile34, Phe96–Met116, Phe129–Ser149, Leu162–Leu182, Val199–Gly219, Phe260–Leu280, Met287–Tyr307, and Ile311–Leu331. His262 provides a ligand contact to heme. Position 317 (His317) interacts with heme.

The protein belongs to the COX15/CtaA family. Type 2 subfamily. Interacts with CtaB. Heme b is required as a cofactor.

It is found in the cell membrane. The catalysed reaction is Fe(II)-heme o + 2 A + H2O = Fe(II)-heme a + 2 AH2. It functions in the pathway porphyrin-containing compound metabolism; heme A biosynthesis; heme A from heme O: step 1/1. Catalyzes the conversion of heme O to heme A by two successive hydroxylations of the methyl group at C8. The first hydroxylation forms heme I, the second hydroxylation results in an unstable dihydroxymethyl group, which spontaneously dehydrates, resulting in the formyl group of heme A. The polypeptide is Heme A synthase (Ehrlichia ruminantium (strain Gardel)).